The primary structure comprises 200 residues: Protein GrpE (200 aa).

Composition is skewed to acidic residues over residues 1-17 and 34-44; these read MNEQ…EQFD and AFAEAGEETRD. Positions 1–49 are disordered; sequence MNEQPNEELQSEDEQFDPQETVSFEGETAANDEAFAEAGEETRDEEMTR.

It belongs to the GrpE family. Homodimer.

The protein resides in the cytoplasm. Its function is as follows. Participates actively in the response to hyperosmotic and heat shock by preventing the aggregation of stress-denatured proteins, in association with DnaK and GrpE. It is the nucleotide exchange factor for DnaK and may function as a thermosensor. Unfolded proteins bind initially to DnaJ; upon interaction with the DnaJ-bound protein, DnaK hydrolyzes its bound ATP, resulting in the formation of a stable complex. GrpE releases ADP from DnaK; ATP binding to DnaK triggers the release of the substrate protein, thus completing the reaction cycle. Several rounds of ATP-dependent interactions between DnaJ, DnaK and GrpE are required for fully efficient folding. The polypeptide is Protein GrpE (Rhodopirellula baltica (strain DSM 10527 / NCIMB 13988 / SH1)).